The sequence spans 78 residues: Small ribosomal subunit protein bS18 (78 aa).

The protein belongs to the bacterial ribosomal protein bS18 family. Part of the 30S ribosomal subunit. Forms a tight heterodimer with protein bS6.

In terms of biological role, binds as a heterodimer with protein bS6 to the central domain of the 16S rRNA, where it helps stabilize the platform of the 30S subunit. This is Small ribosomal subunit protein bS18 from Lactobacillus acidophilus (strain ATCC 700396 / NCK56 / N2 / NCFM).